A 278-amino-acid chain; its full sequence is MSGEVWRWNKQAEMNSIRDCLKHCNSIAIDTEFPGCLKETPMDASDEIRYRDMKFNVDNTHLIQLGLTLFGKGITKTWEINLSDFNESKSLKNDKSIAFLKNNGLDLDKIREEGIGIEEFFMEFSQILNEKHGKMRWVTFQGSYDKAYLLKGLTRKPLPETSKEFDETVQQLLGRFVYDVKKMAGLCSGLSSRFGLQRIADVLQMRRVGKAHHAGSDSELTARVFTKLIFDLVNSRKESTGRRADDQQYQLEQQQHQQQLMMTRCYIPIPVQGRNYVL.

4 residues coordinate a divalent metal cation: Asp-30, Glu-32, Asp-145, and Asp-217.

This sequence belongs to the CAF1 family. As to quaternary structure, component of the CCR4-NOT complex, at least composed of CRR4 and CAF1 proteins. The cofactor is a divalent metal cation.

It localises to the nucleus. The protein localises to the cytoplasm. It catalyses the reaction Exonucleolytic cleavage of poly(A) to 5'-AMP.. Functionally, ubiquitous transcription factor required for a diverse set of processes. It is a component of the CCR4 complex involved in the control of gene expression. In Arabidopsis thaliana (Mouse-ear cress), this protein is Probable CCR4-associated factor 1 homolog 5 (CAF1-5).